We begin with the raw amino-acid sequence, 317 residues long: Orange carotenoid-binding protein (317 aa).

An OCP N-terminal domain is found at 18-169; the sequence is ADVVPATIAR…DMGFDTSKLG (152 aa). 3 residues coordinate 3'-hydroxyechinenone: Leu-37, Tyr-203, and Trp-290.

The protein belongs to the orange carotenoid-binding protein family. As to quaternary structure, homodimer. Requires 3'-hydroxyechinenone as cofactor. In terms of processing, proteolytically cleaved into a red 16.7 kDa form named red carotenoid-binding protein (RCP) which lacks 15 residues from the N-terminus and approximately 150 residues from the C-terminus.

It localises to the cellular thylakoid membrane. Acts as a blue-light photoreceptor and photo-protectant. Essential for inhibiting damaged induced by excess blue-green light via a process known as non-photochemical quenching (NPQ). Binding carotenoids improves OCP's intrinsic photoprotectant activity by broadening its absorption spectrum and facilitating the dissipation of absorbed energy. In the dark or dim light the stable inactive form (OCP-O) is orange, upon illumination with blue-green light it converts to a metastable active red form (OCP-R), inducing energy dissipation, quenching cellular fluorescence via NPQ. In Limnospira maxima (Arthrospira maxima), this protein is Orange carotenoid-binding protein.